The following is a 375-amino-acid chain: Queuine tRNA-ribosyltransferase (375 aa).

The active-site Proton acceptor is the aspartate 90. Substrate is bound by residues 90–94 (DSGGF), aspartate 144, glutamine 190, and glycine 217. The interval 248-254 (GIGTPHY) is RNA binding. Aspartate 267 functions as the Nucleophile in the catalytic mechanism. The interval 272-276 (ARITR) is RNA binding; important for wobble base 34 recognition. Zn(2+)-binding residues include cysteine 305, cysteine 307, cysteine 310, and histidine 336.

The protein belongs to the queuine tRNA-ribosyltransferase family. Homodimer. Within each dimer, one monomer is responsible for RNA recognition and catalysis, while the other monomer binds to the replacement base PreQ1. It depends on Zn(2+) as a cofactor.

The catalysed reaction is 7-aminomethyl-7-carbaguanine + guanosine(34) in tRNA = 7-aminomethyl-7-carbaguanosine(34) in tRNA + guanine. Its pathway is tRNA modification; tRNA-queuosine biosynthesis. In terms of biological role, catalyzes the base-exchange of a guanine (G) residue with the queuine precursor 7-aminomethyl-7-deazaguanine (PreQ1) at position 34 (anticodon wobble position) in tRNAs with GU(N) anticodons (tRNA-Asp, -Asn, -His and -Tyr). Catalysis occurs through a double-displacement mechanism. The nucleophile active site attacks the C1' of nucleotide 34 to detach the guanine base from the RNA, forming a covalent enzyme-RNA intermediate. The proton acceptor active site deprotonates the incoming PreQ1, allowing a nucleophilic attack on the C1' of the ribose to form the product. After dissociation, two additional enzymatic reactions on the tRNA convert PreQ1 to queuine (Q), resulting in the hypermodified nucleoside queuosine (7-(((4,5-cis-dihydroxy-2-cyclopenten-1-yl)amino)methyl)-7-deazaguanosine). The protein is Queuine tRNA-ribosyltransferase of Borreliella burgdorferi (strain ZS7) (Borrelia burgdorferi).